The following is a 786-amino-acid chain: Ribosome biogenesis protein BOP1 homolog (786 aa).

Residues 1-11 are compositionally biased toward basic residues; sequence MAKKSAIKRKV. A disordered region spans residues 1-161; sequence MAKKSAIKRK…NSDTSDEEDI (161 aa). Residues 17 to 26 are compositionally biased toward polar residues; that stretch reads INEQASVSEQ. 3 stretches are compositionally biased toward acidic residues: residues 44-53, 60-72, and 82-114; these read EDTTDDEGID, TSDDLLFESDEEG, and SGEDEQGEEDDNDDEEEEDEDEEESGSSDDDAK. The span at 122-135 shows a compositional bias: polar residues; the sequence is KATLSKTTGDSSNI. Positions 141–150 are enriched in basic and acidic residues; it reads PRRDPSKPEY. Residues 151 to 160 are compositionally biased toward acidic residues; sequence ENSDTSDEED. WD repeat units follow at residues 447–488, 490–528, 572–614, 617–655, 658–697, 701–740, and 756–786; these read GHTD…RTIE, NDVVRCVAWCPNAKLSIIAVATGTRLLLINPKVGDKLLV, THFK…SQIP, KSKGLIQCVLFHPVKPCFFVATQHNIRIYDLVKQELIKK, TNSKWISGMSIHPKGDNLLVSTYDKKMLWFDLDLSTKPYQ, LHRNAVRSIAFHLRYPLFASGSDDQAVIVSHGMVYNDLLQ, and RDEFGVLDVNWHPVQPWIFSTGADCTIRLYT.

This sequence belongs to the WD repeat BOP1/ERB1 family.

Its subcellular location is the nucleus. It localises to the nucleolus. The protein resides in the nucleoplasm. Functionally, required for maturation of ribosomal RNAs and formation of the large ribosomal subunit. This Drosophila grimshawi (Hawaiian fruit fly) protein is Ribosome biogenesis protein BOP1 homolog.